A 285-amino-acid polypeptide reads, in one-letter code: uncharacterized protein (285 aa).

One can recognise an ATP-grasp domain in the interval 107-285 (FLTVDTTIFD…KHHLKRQMIP (179 aa)).

This is an uncharacterized protein from Mycoplasma pneumoniae (strain ATCC 29342 / M129 / Subtype 1) (Mycoplasmoides pneumoniae).